A 236-amino-acid chain; its full sequence is MNSLSFLNHEFEAFPSPELALTDPNGLLAIGGDLRPERLLTAYYHGIFPWFNADDPILWWSPDPRAIFIPGQVNISTSLRKYLKKQPWRFTINHAFTDVMAGCAQPRRKQAGTWITHEIQMAYRELHHNGHAHSVEVWHGERLIGGLYGLAIGQVFCGESMFHRETNASKAAMLLLQQHLINMDFKLIDAQVMNPHLESLGAKPVKRANFIQLLTQFRDNTANPAAWIPSEVTLEL.

This sequence belongs to the L/F-transferase family.

The protein localises to the cytoplasm. The catalysed reaction is N-terminal L-lysyl-[protein] + L-leucyl-tRNA(Leu) = N-terminal L-leucyl-L-lysyl-[protein] + tRNA(Leu) + H(+). It carries out the reaction N-terminal L-arginyl-[protein] + L-leucyl-tRNA(Leu) = N-terminal L-leucyl-L-arginyl-[protein] + tRNA(Leu) + H(+). It catalyses the reaction L-phenylalanyl-tRNA(Phe) + an N-terminal L-alpha-aminoacyl-[protein] = an N-terminal L-phenylalanyl-L-alpha-aminoacyl-[protein] + tRNA(Phe). Functionally, functions in the N-end rule pathway of protein degradation where it conjugates Leu, Phe and, less efficiently, Met from aminoacyl-tRNAs to the N-termini of proteins containing an N-terminal arginine or lysine. The sequence is that of Leucyl/phenylalanyl-tRNA--protein transferase from Shewanella sp. (strain MR-4).